The following is a 122-amino-acid chain: Putative 2'-deoxynucleoside 5'-phosphate N-hydrolase 1 (122 aa).

Substrate is bound by residues 4 to 10 (FLSGSIR), Tyr-19, His-37, Glu-83, and 105 to 107 (SAM).

Belongs to the 2'-deoxynucleoside 5'-phosphate N-hydrolase 1 family. Monomer and homodimer.

The enzyme catalyses a pyrimidine 2'-deoxyribonucleoside 5'-phosphate + H2O = a pyrimidine nucleobase + 2-deoxy-D-ribose 5-phosphate. The catalysed reaction is a purine 2'-deoxyribonucleoside 5'-phosphate + H2O = a purine nucleobase + 2-deoxy-D-ribose 5-phosphate. Functionally, catalyzes the cleavage of the N-glycosidic bond of deoxyribonucleoside 5'-monophosphates to yield deoxyribose 5-phosphate and a purine or pyrimidine base. In Methanococcoides burtonii (strain DSM 6242 / NBRC 107633 / OCM 468 / ACE-M), this protein is Putative 2'-deoxynucleoside 5'-phosphate N-hydrolase 1.